We begin with the raw amino-acid sequence, 163 residues long: Lipoprotein signal peptidase (163 aa).

The next 4 helical transmembrane spans lie at 5–25 (VLTF…TKSL), 37–57 (IIPG…FGML), 67–87 (LMLV…VFKS), and 91–111 (LSNL…GNLY). Catalysis depends on residues Asp121 and Asp139. A helical membrane pass occupies residues 132–152 (WPAFNVADASITIGIALFIGY).

It belongs to the peptidase A8 family.

It is found in the cell inner membrane. The catalysed reaction is Release of signal peptides from bacterial membrane prolipoproteins. Hydrolyzes -Xaa-Yaa-Zaa-|-(S,diacylglyceryl)Cys-, in which Xaa is hydrophobic (preferably Leu), and Yaa (Ala or Ser) and Zaa (Gly or Ala) have small, neutral side chains.. Its pathway is protein modification; lipoprotein biosynthesis (signal peptide cleavage). In terms of biological role, this protein specifically catalyzes the removal of signal peptides from prolipoproteins. The polypeptide is Lipoprotein signal peptidase (Sulfurihydrogenibium sp. (strain YO3AOP1)).